A 270-amino-acid chain; its full sequence is tRNA pseudouridine synthase A (270 aa).

D60 serves as the catalytic Nucleophile. The tract at residues 107–111 (FHARF) is RNA binding. Y118 serves as a coordination point for substrate. The segment at 168–172 (QCQSR) is interaction with tRNA.

The protein belongs to the tRNA pseudouridine synthase TruA family. Homodimer.

It catalyses the reaction uridine(38/39/40) in tRNA = pseudouridine(38/39/40) in tRNA. Functionally, formation of pseudouridine at positions 38, 39 and 40 in the anticodon stem and loop of transfer RNAs. The chain is tRNA pseudouridine synthase A from Shigella boydii serotype 18 (strain CDC 3083-94 / BS512).